Consider the following 77-residue polypeptide: UPF0213 protein VNG_2274C (77 aa).

One can recognise a GIY-YIG domain in the interval 1-75 (MHHVYVIECS…KQLSRAQKEA (75 aa)).

It belongs to the UPF0213 family.

The sequence is that of UPF0213 protein VNG_2274C from Halobacterium salinarum (strain ATCC 700922 / JCM 11081 / NRC-1) (Halobacterium halobium).